The primary structure comprises 435 residues: MSIITDVYAREVLDSRGNPTLEVEVYTESGAFGRGMVPSGASTGEHEAVELRDGDKSRYLGLGTQKAVDNVNNIIAEAIIGYDVRDQQAIDRAMITLDGTPNKGKLGANAILGVSIAVARAAADYLEVPLYTYLGGFNTKVLPTPMMNIINGGSHSDAPIAFQEFMIMPVGAPTFKEGLRWGAEVFHALKKILKERGLVTAVGDEGGFAPKFEGTEDGVETILKAIEAAGYEAGENGIMIGFDCASSEFYDKERKVYDYTKFEGEGAAVRTSAEQVDYLEELVNKYPIITIEDGMDENDWDGWKVLTERLGKRVQLVGDDFFVTNTEYLARGIKENAANSILIKVNQIGTLTETFEAIEMAKEAGYTAVVSHRSGETEDSTIADIAVATNAGQIKTGSLSRTDRIAKYNQLLRIEDQLGEVAQYKGIKSFYNLKK.

Residue glutamine 163 coordinates (2R)-2-phosphoglycerate. Residue glutamate 205 is the Proton donor of the active site. Positions 243, 292, and 319 each coordinate Mg(2+). Lysine 344, arginine 373, serine 374, and lysine 395 together coordinate (2R)-2-phosphoglycerate. Catalysis depends on lysine 344, which acts as the Proton acceptor.

Belongs to the enolase family. Mg(2+) is required as a cofactor.

It is found in the cytoplasm. It localises to the secreted. The protein localises to the cell surface. The catalysed reaction is (2R)-2-phosphoglycerate = phosphoenolpyruvate + H2O. Its pathway is carbohydrate degradation; glycolysis; pyruvate from D-glyceraldehyde 3-phosphate: step 4/5. Functionally, catalyzes the reversible conversion of 2-phosphoglycerate (2-PG) into phosphoenolpyruvate (PEP). It is essential for the degradation of carbohydrates via glycolysis. The chain is Enolase from Streptococcus pyogenes serotype M12 (strain MGAS2096).